Consider the following 231-residue polypeptide: ATP synthase subunit a (231 aa).

5 helical membrane passes run 14-34 (GFLK…VLAV), 78-98 (YLGF…CTVI), 107-127 (SLST…FFGI), 174-194 (MIIG…MTAL), and 196-216 (LLTG…YIAA).

This sequence belongs to the ATPase A chain family. As to quaternary structure, F-type ATPases have 2 components, CF(1) - the catalytic core - and CF(0) - the membrane proton channel. CF(1) has five subunits: alpha(3), beta(3), gamma(1), delta(1), epsilon(1). CF(0) has three main subunits: a(1), b(2) and c(9-12). The alpha and beta chains form an alternating ring which encloses part of the gamma chain. CF(1) is attached to CF(0) by a central stalk formed by the gamma and epsilon chains, while a peripheral stalk is formed by the delta and b chains.

It is found in the cell inner membrane. Key component of the proton channel; it plays a direct role in the translocation of protons across the membrane. This chain is ATP synthase subunit a, found in Albidiferax ferrireducens (strain ATCC BAA-621 / DSM 15236 / T118) (Rhodoferax ferrireducens).